Here is a 355-residue protein sequence, read N- to C-terminus: Tetraacyldisaccharide 4'-kinase (355 aa).

54–61 (TVGGAGKT) contacts ATP.

The protein belongs to the LpxK family.

The enzyme catalyses a lipid A disaccharide + ATP = a lipid IVA + ADP + H(+). The protein operates within glycolipid biosynthesis; lipid IV(A) biosynthesis; lipid IV(A) from (3R)-3-hydroxytetradecanoyl-[acyl-carrier-protein] and UDP-N-acetyl-alpha-D-glucosamine: step 6/6. Transfers the gamma-phosphate of ATP to the 4'-position of a tetraacyldisaccharide 1-phosphate intermediate (termed DS-1-P) to form tetraacyldisaccharide 1,4'-bis-phosphate (lipid IVA). In Rhizobium rhizogenes (strain K84 / ATCC BAA-868) (Agrobacterium radiobacter), this protein is Tetraacyldisaccharide 4'-kinase.